The chain runs to 87 residues: Small ribosomal subunit protein uS15 (87 aa).

Belongs to the universal ribosomal protein uS15 family. In terms of assembly, part of the 30S ribosomal subunit. Forms a bridge to the 50S subunit in the 70S ribosome, contacting the 23S rRNA.

In terms of biological role, one of the primary rRNA binding proteins, it binds directly to 16S rRNA where it helps nucleate assembly of the platform of the 30S subunit by binding and bridging several RNA helices of the 16S rRNA. Functionally, forms an intersubunit bridge (bridge B4) with the 23S rRNA of the 50S subunit in the ribosome. The protein is Small ribosomal subunit protein uS15 of Clostridium acetobutylicum (strain ATCC 824 / DSM 792 / JCM 1419 / IAM 19013 / LMG 5710 / NBRC 13948 / NRRL B-527 / VKM B-1787 / 2291 / W).